Here is a 397-residue protein sequence, read N- to C-terminus: Cysteine desulfurase IscS (397 aa).

Pyridoxal 5'-phosphate contacts are provided by residues 72 to 73, Asn152, Gln180, and 200 to 202; these read GS and SAH. Lys203 carries the N6-(pyridoxal phosphate)lysine modification. Position 238 (Thr238) interacts with pyridoxal 5'-phosphate. Cys328 acts as the Cysteine persulfide intermediate in catalysis. Cys328 contributes to the [2Fe-2S] cluster binding site.

It belongs to the class-V pyridoxal-phosphate-dependent aminotransferase family. NifS/IscS subfamily. As to quaternary structure, homodimer. Forms a heterotetramer with IscU, interacts with other sulfur acceptors. Requires pyridoxal 5'-phosphate as cofactor.

It is found in the cytoplasm. The catalysed reaction is (sulfur carrier)-H + L-cysteine = (sulfur carrier)-SH + L-alanine. Its pathway is cofactor biosynthesis; iron-sulfur cluster biosynthesis. Master enzyme that delivers sulfur to a number of partners involved in Fe-S cluster assembly, tRNA modification or cofactor biosynthesis. Catalyzes the removal of elemental sulfur atoms from cysteine to produce alanine. Functions as a sulfur delivery protein for Fe-S cluster synthesis onto IscU, an Fe-S scaffold assembly protein, as well as other S acceptor proteins. In Clostridium botulinum (strain ATCC 19397 / Type A), this protein is Cysteine desulfurase IscS.